Consider the following 1458-residue polypeptide: Phospholipase B1, membrane-associated (1458 aa).

Residues 1–21 (MGLRPGIFLLELLLLLGQGTP) form the signal peptide. The Extracellular segment spans residues 22 to 1417 (QIHTSPRKST…QAEEAPEVLY (1396 aa)). Tandem repeats lie at residues 39–347 (ETLK…YRNS), 362–707 (VREG…YKNS), and 708–1054 (MQGH…PRNS). Positions 39 to 1402 (ETLKNSPFPC…SPYLYTLRNS (1364 aa)) are 4 X 308-326 AA approximate repeats. 2 N-linked (GlcNAc...) asparagine glycosylation sites follow: asparagine 173 and asparagine 240. Serine 400 is a catalytic residue. Residue asparagine 493 is glycosylated (N-linked (GlcNAc...) asparagine). Aspartate 514 is a catalytic residue. Asparagine 529 and asparagine 590 each carry an N-linked (GlcNAc...) asparagine glycan. Histidine 655 is a catalytic residue. Asparagine 690, asparagine 783, asparagine 797, asparagine 809, asparagine 1055, asparagine 1113, asparagine 1275, and asparagine 1378 each carry an N-linked (GlcNAc...) asparagine glycan. Repeat unit 4 spans residues 1064 to 1402 (IENWGSDFLC…SPYLYTLRNS (339 aa)). Positions 1403–1445 (RLLPDQAEEAPEVLYWAVPVAAGVGLVVGIIGTVVWRCRRGGR) are necessary for membrane localization. The helical transmembrane segment at 1418–1438 (WAVPVAAGVGLVVGIIGTVVW) threads the bilayer. At 1439–1458 (RCRRGGRREDPPMSLRTVAL) the chain is on the cytoplasmic side.

The protein belongs to the 'GDSL' lipolytic enzyme family. Phospholipase B1 subfamily. In terms of processing, undergoes proteolytic cleavage in the ileum. As to expression, expressed in the epidermis (at protein level).

It localises to the apical cell membrane. It catalyses the reaction a 1,2-diacyl-sn-glycero-3-phosphocholine + H2O = a 1-acyl-sn-glycero-3-phosphocholine + a fatty acid + H(+). The enzyme catalyses a 1-O-alkyl-2-acyl-sn-glycero-3-phosphocholine + H2O = a 1-O-alkyl-sn-glycero-3-phosphocholine + a fatty acid + H(+). The catalysed reaction is a 1-acyl-sn-glycero-3-phosphocholine + H2O = sn-glycerol 3-phosphocholine + a fatty acid + H(+). It carries out the reaction a triacylglycerol + H2O = a diacylglycerol + a fatty acid + H(+). It catalyses the reaction 1,2-dihexadecanoyl-sn-glycero-3-phosphocholine + H2O = 1-hexadecanoyl-sn-glycero-3-phosphocholine + hexadecanoate + H(+). The enzyme catalyses 1-hexadecanoyl-2-(9Z-octadecenoyl)-sn-glycero-3-phosphocholine + H2O = 1-hexadecanoyl-sn-glycero-3-phosphocholine + (9Z)-octadecenoate + H(+). The catalysed reaction is 1,2-di-(9Z-octadecenoyl)-sn-glycero-3-phosphocholine + H2O = 1-(9Z-octadecenoyl)-sn-glycero-3-phosphocholine + (9Z)-octadecenoate + H(+). It carries out the reaction 1-hexadecanoyl-2-(9Z,12Z-octadecadienoyl)-sn-glycero-3-phosphocholine + H2O = (9Z,12Z)-octadecadienoate + 1-hexadecanoyl-sn-glycero-3-phosphocholine + H(+). It catalyses the reaction 1-hexadecanoyl-2-(9Z,12Z-octadecadienoyl)-sn-glycero-3-phosphocholine + H2O = 2-(9Z,12Z-octadecadienoyl)-sn-glycero-3-phosphocholine + hexadecanoate + H(+). The enzyme catalyses 1-hexadecanoyl-2-(9Z-octadecenoyl)-sn-glycero-3-phosphoethanolamine + H2O = 1-hexadecanoyl-sn-glycero-3-phosphoethanolamine + (9Z)-octadecenoate + H(+). The catalysed reaction is 1-hexadecanoyl-2-(9Z-octadecenoyl)-sn-glycero-3-phospho-(1'-sn-glycerol) + H2O = 1-hexadecanoyl-sn-glycero-3-phospho-(1'-sn-glycerol) + (9Z)-octadecenoate + H(+). It carries out the reaction 1,2-dihexadecanoyl-sn-glycero-3-phosphocholine + 2 H2O = sn-glycerol 3-phosphocholine + 2 hexadecanoate + 2 H(+). It catalyses the reaction 1-O-hexadecyl-2-(9Z)-octadecenoyl-sn-glycero-3-phosphocholine + H2O = 1-O-hexadecyl-sn-glycero-3-phosphocholine + (9Z)-octadecenoate + H(+). The enzyme catalyses 1-hexadecanoyl-sn-glycero-3-phosphocholine + H2O = sn-glycerol 3-phosphocholine + hexadecanoate + H(+). The catalysed reaction is 1,2,3-tri-(9Z-octadecenoyl)-glycerol + H2O = di-(9Z)-octadecenoylglycerol + (9Z)-octadecenoate + H(+). It carries out the reaction 1-hexadecanoyl-2-(9Z)-octadecenoyl-3-octadecanoyl-sn-glycerol + H2O = 1-hexadecanoyl-2-(9Z-octadecenoyl)-sn-glycerol + octadecanoate + H(+). It catalyses the reaction 1,3-dihexadecanoyl-2-(9Z-octadecenoyl)glycerol + H2O = 1,3-dihexadecanoylglycerol + (9Z)-octadecenoate + H(+). The enzyme catalyses 1,3-dihexadecanoyl-2-(9Z-octadecenoyl)glycerol + H2O = 1-hexadecanoyl-2-(9Z-octadecenoyl)-glycerol + hexadecanoate + H(+). The catalysed reaction is 1-hexadecanoyl-2-(9Z)-octadecenoyl-3-octadecanoyl-sn-glycerol + H2O = 1-hexadecanoyl-3-octadecanoyl-sn-glycerol + (9Z)-octadecenoate + H(+). It carries out the reaction 1-hexadecanoyl-2-(9Z)-octadecenoyl-3-octadecanoyl-sn-glycerol + H2O = 2-(9Z-octadecenoyl)-3-octadecanoyl-sn-glycerol + hexadecanoate + H(+). It catalyses the reaction 1-octadecanoyl-2-(9Z,12Z)-octadecadienoyl-sn-glycerol + H2O = 1-octadecanoyl-sn-glycerol + (9Z,12Z)-octadecadienoate + H(+). The enzyme catalyses 1,2-di-(9Z-octadecenoyl)-sn-glycerol + H2O = 1-(9Z-octadecenoyl)-sn-glycerol + (9Z)-octadecenoate + H(+). The catalysed reaction is 2,3-di-(9Z)-octadecenoyl-sn-glycerol + H2O = 3-(9Z-octadecenoyl)-sn-glycerol + (9Z)-octadecenoate + H(+). It carries out the reaction 1,3-di-(9Z-octadecenoyl)-glycerol + H2O = 1-(9Z-octadecenoyl)-glycerol + (9Z)-octadecenoate + H(+). It catalyses the reaction 1-(9Z-octadecenoyl)-glycerol + H2O = glycerol + (9Z)-octadecenoate + H(+). The enzyme catalyses 2-(9Z-octadecenoyl)-glycerol + H2O = glycerol + (9Z)-octadecenoate + H(+). Functionally, calcium-independent membrane-associated phospholipase that catalyzes complete diacylation of phospholipids by hydrolyzing both sn-1 and sn-2 fatty acyl chains attached to the glycerol backbone (phospholipase B activity). Has dual phospholipase and lysophospholipase activities toward diacylphospholipids. Preferentially cleaves sn-2 ester bonds over sn-1 bonds. Acts as a lipase toward glycerolipid substrates. Hydrolyzes fatty acyl chains of diacylglycerols with preference for the sn-2 position and of triacylglycerols with not positional selectivity. May also hydrolyze long chain retinyl esters such as retinyl palmitate. May contribute to digestion of dietary phospholipids, glycerolipids and retinoids, facilitating lipid absorption at the brush border. The polypeptide is Phospholipase B1, membrane-associated (PLB1) (Homo sapiens (Human)).